The sequence spans 261 residues: Cytochrome c oxidase subunit 3 (261 aa).

The Mitochondrial matrix portion of the chain corresponds to 1–15; the sequence is MTHQTHAYHMVNPSP. Residues 16–34 form a helical membrane-spanning segment; that stretch reads WPLTGALSALLMTSGLAMW. Residues 35-40 are Mitochondrial intermembrane-facing; sequence FHFNST. Residues 41–66 traverse the membrane as a helical segment; it reads LLLAMGLLTNILTMYQWWRDIIREST. Over 67–72 the chain is Mitochondrial matrix; the sequence is FQGHHT. The chain crosses the membrane as a helical span at residues 73-105; that stretch reads SIVQKGLRYGMILFIISEVFFFSGFFWAFYHSS. Over 106–128 the chain is Mitochondrial intermembrane; the sequence is LAPTPELGGCWPPTGIHPLNPLE. Residues 129–152 traverse the membrane as a helical segment; it reads VPLLNTSVLLASGVSITWAHHSLM. Topologically, residues 153-155 are mitochondrial matrix; sequence EGN. The helical transmembrane segment at 156–183 threads the bilayer; sequence RKNMLQGLFITISLGVYFTLLQASEYYE. Residues 184–190 are Mitochondrial intermembrane-facing; that stretch reads ASFTISD. A helical transmembrane segment spans residues 191-223; it reads GVYGSTFFVATGFHGLHVIIGSTFLIVCFLRQL. The Mitochondrial matrix segment spans residues 224-232; sequence KFHFTSSHH. Residues 233-256 traverse the membrane as a helical segment; it reads FGFEAAAWYWHFVDVVWLFLYVSI. The Mitochondrial intermembrane segment spans residues 257 to 261; it reads YWWGS.

It belongs to the cytochrome c oxidase subunit 3 family. Component of the cytochrome c oxidase (complex IV, CIV), a multisubunit enzyme composed of 14 subunits. The complex is composed of a catalytic core of 3 subunits MT-CO1, MT-CO2 and MT-CO3, encoded in the mitochondrial DNA, and 11 supernumerary subunits COX4I, COX5A, COX5B, COX6A, COX6B, COX6C, COX7A, COX7B, COX7C, COX8 and NDUFA4, which are encoded in the nuclear genome. The complex exists as a monomer or a dimer and forms supercomplexes (SCs) in the inner mitochondrial membrane with NADH-ubiquinone oxidoreductase (complex I, CI) and ubiquinol-cytochrome c oxidoreductase (cytochrome b-c1 complex, complex III, CIII), resulting in different assemblies (supercomplex SCI(1)III(2)IV(1) and megacomplex MCI(2)III(2)IV(2)).

Its subcellular location is the mitochondrion inner membrane. The enzyme catalyses 4 Fe(II)-[cytochrome c] + O2 + 8 H(+)(in) = 4 Fe(III)-[cytochrome c] + 2 H2O + 4 H(+)(out). Functionally, component of the cytochrome c oxidase, the last enzyme in the mitochondrial electron transport chain which drives oxidative phosphorylation. The respiratory chain contains 3 multisubunit complexes succinate dehydrogenase (complex II, CII), ubiquinol-cytochrome c oxidoreductase (cytochrome b-c1 complex, complex III, CIII) and cytochrome c oxidase (complex IV, CIV), that cooperate to transfer electrons derived from NADH and succinate to molecular oxygen, creating an electrochemical gradient over the inner membrane that drives transmembrane transport and the ATP synthase. Cytochrome c oxidase is the component of the respiratory chain that catalyzes the reduction of oxygen to water. Electrons originating from reduced cytochrome c in the intermembrane space (IMS) are transferred via the dinuclear copper A center (CU(A)) of subunit 2 and heme A of subunit 1 to the active site in subunit 1, a binuclear center (BNC) formed by heme A3 and copper B (CU(B)). The BNC reduces molecular oxygen to 2 water molecules using 4 electrons from cytochrome c in the IMS and 4 protons from the mitochondrial matrix. The polypeptide is Cytochrome c oxidase subunit 3 (MT-CO3) (Equus caballus (Horse)).